Here is a 204-residue protein sequence, read N- to C-terminus: FMN-dependent NADH:quinone oxidoreductase (204 aa).

FMN contacts are provided by residues Ser-10, 16–18 (SIS), and 96–99 (MYNF).

Belongs to the azoreductase type 1 family. In terms of assembly, homodimer. It depends on FMN as a cofactor.

It carries out the reaction 2 a quinone + NADH + H(+) = 2 a 1,4-benzosemiquinone + NAD(+). The catalysed reaction is N,N-dimethyl-1,4-phenylenediamine + anthranilate + 2 NAD(+) = 2-(4-dimethylaminophenyl)diazenylbenzoate + 2 NADH + 2 H(+). Its function is as follows. Quinone reductase that provides resistance to thiol-specific stress caused by electrophilic quinones. Also exhibits azoreductase activity. Catalyzes the reductive cleavage of the azo bond in aromatic azo compounds to the corresponding amines. This Herminiimonas arsenicoxydans protein is FMN-dependent NADH:quinone oxidoreductase.